A 269-amino-acid chain; its full sequence is Calretinin (269 aa).

6 consecutive EF-hand domains span residues 14–49 (LSAS…LESA), 61–96 (SLGD…EENF), 105–140 (GSSS…LLKK), 149–184 (KLQE…QENF), 193–228 (LSSE…LYEK), and 230–265 (KKEM…VLCS). Positions 27, 29, 31, 33, 38, 74, 76, 78, 80, 85, 118, 120, 122, 124, 129, 162, 164, 166, 168, 173, 206, 208, 210, and 217 each coordinate Ca(2+).

This sequence belongs to the calbindin family.

The protein localises to the synapse. The protein resides in the cell projection. It is found in the dendrite. Calcium-binding protein involved in calcium homeostasis and signal transduction. It plays a critical role in buffering intracellular calcium levels and modulating calcium-dependent signaling pathways. Predominantly expressed in specific neuronal populations, influences synaptic plasticity and neuronal excitability, contributing to learning and memory. During embryonic development, it facilitates neuronal differentiation and maturation. The protein is Calretinin (CALB2) of Gallus gallus (Chicken).